Here is a 788-residue protein sequence, read N- to C-terminus: Pyridoxal-dependent decarboxylase domain-containing protein 1 (788 aa).

The span at 28–40 (EDSQRRTEEENGK) shows a compositional bias: basic and acidic residues. The disordered stretch occupies residues 28–51 (EDSQRRTEEENGKKLISGDIPGPL). The residue at position 414 (Thr414) is a Phosphothreonine. Ser652 bears the Phosphoserine mark. Residues 684-788 (AGVTLPPTPS…SQVEGPESLR (105 aa)) form a disordered region. 2 positions are modified to phosphothreonine: Thr687 and Thr691. A phosphoserine mark is found at Ser710, Ser718, and Ser722. Over residues 725 to 734 (HIEDLEKVER) the composition is skewed to basic and acidic residues. A compositionally biased stretch (polar residues) spans 738–750 (GPEQITLEASSTE). Ser748, Ser757, Ser779, and Ser786 each carry phosphoserine. The segment covering 772-788 (PHPEDDHSQVEGPESLR) has biased composition (basic and acidic residues).

It belongs to the group II decarboxylase family. Requires pyridoxal 5'-phosphate as cofactor.

This chain is Pyridoxal-dependent decarboxylase domain-containing protein 1 (PDXDC1), found in Homo sapiens (Human).